The sequence spans 251 residues: Ubiquitin-conjugating enzyme E2 22 (251 aa).

The UBC core domain maps to 10 to 156 (NVIKQLAKEL…ARLYTGIHAK (147 aa)). Residue C94 is the Glycyl thioester intermediate of the active site. Residues 230–240 (GLAKVQADKKK) are compositionally biased toward basic and acidic residues. Residues 230–251 (GLAKVQADKKKVDARKKSLKRL) form a disordered region. Positions 230–251 (GLAKVQADKKKVDARKKSLKRL) form a coiled coil. Basic residues predominate over residues 241-251 (VDARKKSLKRL).

It belongs to the ubiquitin-conjugating enzyme family. In terms of processing, self-ubiquitinated. In terms of tissue distribution, expressed in seeds, pistils, siliques, hypocotyls and leaves.

It carries out the reaction S-ubiquitinyl-[E1 ubiquitin-activating enzyme]-L-cysteine + [E2 ubiquitin-conjugating enzyme]-L-cysteine = [E1 ubiquitin-activating enzyme]-L-cysteine + S-ubiquitinyl-[E2 ubiquitin-conjugating enzyme]-L-cysteine.. It participates in protein modification; protein ubiquitination. In terms of biological role, accepts the ubiquitin from the E1 complex and catalyzes its covalent attachment to other proteins. In Arabidopsis thaliana (Mouse-ear cress), this protein is Ubiquitin-conjugating enzyme E2 22 (UBC22).